The following is a 204-amino-acid chain: ATP phosphoribosyltransferase (204 aa).

It belongs to the ATP phosphoribosyltransferase family. Short subfamily. As to quaternary structure, heteromultimer composed of HisG and HisZ subunits.

Its subcellular location is the cytoplasm. The enzyme catalyses 1-(5-phospho-beta-D-ribosyl)-ATP + diphosphate = 5-phospho-alpha-D-ribose 1-diphosphate + ATP. It participates in amino-acid biosynthesis; L-histidine biosynthesis; L-histidine from 5-phospho-alpha-D-ribose 1-diphosphate: step 1/9. Catalyzes the condensation of ATP and 5-phosphoribose 1-diphosphate to form N'-(5'-phosphoribosyl)-ATP (PR-ATP). Has a crucial role in the pathway because the rate of histidine biosynthesis seems to be controlled primarily by regulation of HisG enzymatic activity. In Hydrogenobaculum sp. (strain Y04AAS1), this protein is ATP phosphoribosyltransferase.